Here is a 122-residue protein sequence, read N- to C-terminus: Large ribosomal subunit protein bL12 (122 aa).

Belongs to the bacterial ribosomal protein bL12 family. In terms of assembly, homodimer. Part of the ribosomal stalk of the 50S ribosomal subunit. Forms a multimeric L10(L12)X complex, where L10 forms an elongated spine to which 2 to 4 L12 dimers bind in a sequential fashion. Binds GTP-bound translation factors.

In terms of biological role, forms part of the ribosomal stalk which helps the ribosome interact with GTP-bound translation factors. Is thus essential for accurate translation. This Streptococcus sanguinis (strain SK36) protein is Large ribosomal subunit protein bL12.